Reading from the N-terminus, the 350-residue chain is TLC domain-containing protein fld-1 (350 aa).

Residues 9-29 form a helical membrane-spanning segment; that stretch reads TDLLGPVPTMFLWVIVSFAFF. The segment at 65–100 is disordered; the sequence is GQEAENTENPPENEAEAGEQVEQEPEPDSRDLSAIP. A compositionally biased stretch (acidic residues) spans 75-90; the sequence is PENEAEAGEQVEQEPE. The region spanning 102-279 is the TLC domain; sequence NKKWRISNEC…IINGLVIASL (178 aa). Helical transmembrane passes span 111-131, 145-165, 173-193, 195-215, 229-249, and 270-292; these read CVSL…LLYY, VAIN…VDLL, IIEL…TMFF, RFLG…FLHS, PSFR…RLCV, and IING…RLLA.

Ubiquitously expressed.

The protein localises to the cell membrane. Functionally, regulates the composition and fluidity of the plasma membrane. Inhibits the incorporation of membrane-fluidizing phospholipids containing omega-3 long-chain polyunsaturated fatty acids (LCPUFA) and thereby promotes membrane rigidity. Does not appear to have any effect on LCPUFA synthesis. The polypeptide is TLC domain-containing protein fld-1 (Caenorhabditis elegans).